We begin with the raw amino-acid sequence, 478 residues long: Lysine histidine transporter-like 7 (478 aa).

The Cytoplasmic segment spans residues 1 to 63 (MSIALGNLFD…ITESRKGNVY (63 aa)). A disordered region spans residues 15-45 (ESGGSPLFMSPAPSTDPQPISGEKNGGDGGR). A helical membrane pass occupies residues 64-86 (TATFHLLCSGIGLQVILLPAAFA). The Extracellular portion of the chain corresponds to 87-89 (ALG). The helical transmembrane segment at 90–112 (WVWGTIILTVGFVWKLYTTWLLV) threads the bilayer. Over 113–140 (QLHEAVPGIRISRYVRLAIASFGVKLGK) the chain is Cytoplasmic. The helical transmembrane segment at 141 to 161 (LLGIFPVMYLSGGACTILVIT) threads the bilayer. At 162–177 (GGKSIQQLLQIMSDDN) the chain is on the extracellular side. The helical transmembrane segment at 178–198 (TAPLTSVQCFLVFSCIAMIMS) threads the bilayer. The Cytoplasmic segment spans residues 199-205 (QFPNLNS). A helical membrane pass occupies residues 206–226 (LFGVSLIGAFMGIAYCTVIWI). The Extracellular portion of the chain corresponds to 227–241 (LPVASDSQRTQVSVS). Residues 242-262 (YATMDKSFVHIFNAIGLIALV) form a helical membrane-spanning segment. Over 263–291 (YRGNNLVLEIQGTLPSDSKNPSCKTMWRA) the chain is Cytoplasmic. A helical membrane pass occupies residues 292 to 312 (VMISHALVAICMFPLTFAVYW). Residues 313 to 340 (AYGDKIPATGGPVGNYLKLYTQEHSKRA) are Extracellular-facing. Residues 341–361 (ACFIHLTFIFSCLCSYPINLM) traverse the membrane as a helical segment. Residues 362-379 (PACDNIEMVYITKKKKPA) are Cytoplasmic-facing. The chain crosses the membrane as a helical span at residues 380–402 (SIIVRMMLRVFLSLVCFTIAVGF). Residues 403–406 (PFLP) are Extracellular-facing. A helical membrane pass occupies residues 407–429 (YLAVLIGAIALLVTFTYPCFMWI). Residues 430–439 (SIKKPQRKSP) are Cytoplasmic-facing. The helical transmembrane segment at 440–460 (MWLFNVLVGCLGASLSVLLLV) threads the bilayer. At 461–478 (ASAMRLAQKGLHANFFRP) the chain is on the extracellular side.

The protein belongs to the amino acid/polyamine transporter 2 family. Amino acid/auxin permease (AAAP) (TC 2.A.18.2) subfamily.

The protein localises to the cell membrane. Functionally, amino acid transporter. This Arabidopsis thaliana (Mouse-ear cress) protein is Lysine histidine transporter-like 7.